We begin with the raw amino-acid sequence, 165 residues long: Molybdopterin synthase catalytic subunit (165 aa).

Substrate contacts are provided by residues 42 to 44, 109 to 110, Lys-125, and 132 to 134; these read WVR, HR, and KLE.

It belongs to the MoaE family. As to quaternary structure, heterotetramer of 2 MoaD subunits and 2 MoaE subunits. Also stable as homodimer. The enzyme changes between these two forms during catalysis.

It carries out the reaction 2 [molybdopterin-synthase sulfur-carrier protein]-C-terminal-Gly-aminoethanethioate + cyclic pyranopterin phosphate + H2O = molybdopterin + 2 [molybdopterin-synthase sulfur-carrier protein]-C-terminal Gly-Gly + 2 H(+). It functions in the pathway cofactor biosynthesis; molybdopterin biosynthesis. Converts molybdopterin precursor Z into molybdopterin. This requires the incorporation of two sulfur atoms into precursor Z to generate a dithiolene group. The sulfur is provided by MoaD. In Synechococcus elongatus (strain ATCC 33912 / PCC 7942 / FACHB-805) (Anacystis nidulans R2), this protein is Molybdopterin synthase catalytic subunit (moaE).